Consider the following 347-residue polypeptide: NADH-ubiquinone oxidoreductase chain 2 (347 aa).

11 helical membrane-spanning segments follow: residues 3–23, 25–45, 67–87, 96–116, 122–142, 145–165, 178–198, 200–220, 237–257, 274–294, and 325–345; these read PIILIIILMTVMLGTIIVMIS, HWLLIWIGFEMNMLAIIPIMM, SMLLMMAIIINLMFSGQWTVM, MLMTMALAMKLGMAPFHFWVP, IPLSSGLILLTWQKLAPMSVL, ILPSINLDLILTLSILSITIG, IMAYSSIAHMGWMTAVLLYNP, MTLLNLIIYIIMTSTMFTLFM, APIMTILVLITLLSMGGLPPL, DSIILPTLMAITALLNLYFYM, and LLPTMTVLSTMLLPLTPILSI.

Belongs to the complex I subunit 2 family. In terms of assembly, core subunit of respiratory chain NADH dehydrogenase (Complex I) which is composed of 45 different subunits. Interacts with TMEM242.

The protein resides in the mitochondrion inner membrane. It catalyses the reaction a ubiquinone + NADH + 5 H(+)(in) = a ubiquinol + NAD(+) + 4 H(+)(out). Its function is as follows. Core subunit of the mitochondrial membrane respiratory chain NADH dehydrogenase (Complex I) which catalyzes electron transfer from NADH through the respiratory chain, using ubiquinone as an electron acceptor. Essential for the catalytic activity and assembly of complex I. The protein is NADH-ubiquinone oxidoreductase chain 2 of Ovis aries (Sheep).